The following is a 360-amino-acid chain: Outer membrane protein P2 (360 aa).

The N-terminal stretch at 1-20 is a signal peptide; that stretch reads MKKTLAALIVGAFAASAANA.

The protein belongs to the Gram-negative porin family. Homotrimer.

The protein localises to the cell outer membrane. In terms of biological role, forms pores that allow passive diffusion of small molecules across the outer membrane. The protein is Outer membrane protein P2 (ompP2) of Haemophilus influenzae.